Consider the following 644-residue polypeptide: DNA gyrase subunit B (644 aa).

The Toprim domain maps to 429 to 543 (CEIFLVEGDS…AGYVYIAQPP (115 aa)). Mg(2+) is bound by residues E435, D508, and D510.

This sequence belongs to the type II topoisomerase GyrB family. In terms of assembly, heterotetramer, composed of two GyrA and two GyrB chains. In the heterotetramer, GyrA contains the active site tyrosine that forms a transient covalent intermediate with DNA, while GyrB binds cofactors and catalyzes ATP hydrolysis. Requires Mg(2+) as cofactor. Mn(2+) serves as cofactor. The cofactor is Ca(2+).

The protein localises to the cytoplasm. It catalyses the reaction ATP-dependent breakage, passage and rejoining of double-stranded DNA.. A type II topoisomerase that negatively supercoils closed circular double-stranded (ds) DNA in an ATP-dependent manner to modulate DNA topology and maintain chromosomes in an underwound state. Negative supercoiling favors strand separation, and DNA replication, transcription, recombination and repair, all of which involve strand separation. Also able to catalyze the interconversion of other topological isomers of dsDNA rings, including catenanes and knotted rings. Type II topoisomerases break and join 2 DNA strands simultaneously in an ATP-dependent manner. This Staphylococcus aureus (strain USA300) protein is DNA gyrase subunit B.